The sequence spans 173 residues: Translation initiation factor IF-3 (173 aa).

This sequence belongs to the IF-3 family. In terms of assembly, monomer.

The protein resides in the cytoplasm. IF-3 binds to the 30S ribosomal subunit and shifts the equilibrium between 70S ribosomes and their 50S and 30S subunits in favor of the free subunits, thus enhancing the availability of 30S subunits on which protein synthesis initiation begins. This Neisseria gonorrhoeae (strain ATCC 700825 / FA 1090) protein is Translation initiation factor IF-3.